Reading from the N-terminus, the 108-residue chain is Nucleoid-associated protein Bphy_0952 (108 aa).

The disordered stretch occupies residues 87-108 (AQEKMGGMTSGLPLPPGFKLPF). The span at 99–108 (PLPPGFKLPF) shows a compositional bias: pro residues.

The protein belongs to the YbaB/EbfC family. As to quaternary structure, homodimer.

The protein resides in the cytoplasm. It is found in the nucleoid. Binds to DNA and alters its conformation. May be involved in regulation of gene expression, nucleoid organization and DNA protection. The sequence is that of Nucleoid-associated protein Bphy_0952 from Paraburkholderia phymatum (strain DSM 17167 / CIP 108236 / LMG 21445 / STM815) (Burkholderia phymatum).